Here is a 194-residue protein sequence, read N- to C-terminus: Xanthine phosphoribosyltransferase (194 aa).

2 residues coordinate xanthine: leucine 20 and asparagine 27. 128 to 132 (ANGEA) provides a ligand contact to 5-phospho-alpha-D-ribose 1-diphosphate. Lysine 156 provides a ligand contact to xanthine.

It belongs to the purine/pyrimidine phosphoribosyltransferase family. Xpt subfamily. As to quaternary structure, homodimer.

It is found in the cytoplasm. The enzyme catalyses XMP + diphosphate = xanthine + 5-phospho-alpha-D-ribose 1-diphosphate. It participates in purine metabolism; XMP biosynthesis via salvage pathway; XMP from xanthine: step 1/1. Functionally, converts the preformed base xanthine, a product of nucleic acid breakdown, to xanthosine 5'-monophosphate (XMP), so it can be reused for RNA or DNA synthesis. The protein is Xanthine phosphoribosyltransferase of Macrococcus caseolyticus (strain JCSC5402) (Macrococcoides caseolyticum).